Consider the following 425-residue polypeptide: Succinyl-diaminopimelate desuccinylase (425 aa).

H96 contributes to the Zn(2+) binding site. D98 is a catalytic residue. Position 129 (D129) interacts with Zn(2+). The Proton acceptor role is filled by E163. Residues E164, E192, and H378 each contribute to the Zn(2+) site.

It belongs to the peptidase M20A family. DapE subfamily. In terms of assembly, homodimer. Zn(2+) serves as cofactor. It depends on Co(2+) as a cofactor.

It catalyses the reaction N-succinyl-(2S,6S)-2,6-diaminopimelate + H2O = (2S,6S)-2,6-diaminopimelate + succinate. Its pathway is amino-acid biosynthesis; L-lysine biosynthesis via DAP pathway; LL-2,6-diaminopimelate from (S)-tetrahydrodipicolinate (succinylase route): step 3/3. Its function is as follows. Catalyzes the hydrolysis of N-succinyl-L,L-diaminopimelic acid (SDAP), forming succinate and LL-2,6-diaminopimelate (DAP), an intermediate involved in the bacterial biosynthesis of lysine and meso-diaminopimelic acid, an essential component of bacterial cell walls. This is Succinyl-diaminopimelate desuccinylase from Polaromonas sp. (strain JS666 / ATCC BAA-500).